Reading from the N-terminus, the 5061-residue chain is E3 ubiquitin-protein ligase rnf213-beta (5061 aa).

A compositionally biased stretch (basic residues) spans 1 to 12 (MTRKRKSGKKGK). The segment at 1 to 334 (MTRKRKSGKK…QRKPSPVRAP (334 aa)) is disordered. Composition is skewed to polar residues over residues 24 to 52 (GGST…TQKD) and 75 to 87 (SDGS…TNKE). Positions 100–110 (LQKKGPQKRKG) are enriched in basic residues. Polar residues-rich tracts occupy residues 127-163 (QTSY…TSAS) and 172-200 (TETV…QPPQ). Composition is skewed to basic and acidic residues over residues 217-229 (KGSE…EESV) and 236-289 (LSEI…EEPK). The segment covering 292–301 (AAAAATGKTG) has biased composition (low complexity). Residues 306–322 (EQTNQIEANQDSTMESK) are compositionally biased toward polar residues. Residues 1923-1928 (AVGKSL), E2023, D2074, K2417, and S2492 each bind ATP. 10 residues coordinate Zn(2+): C3957, C3960, C3972, H3974, C3977, C3980, C3993, C3996, C4451, and H4455. Residues 3957-3997 (CRVCLMELSEPFALPCEHVFCRSCLRRSMEREEAQHCPVCR) form an RING-type zinc finger. The segment at 4429–4501 (MPDDHTSEAK…AYGDYDRTRP (73 aa)) adopts an RZ-type zinc-finger fold. The active-site Nucleophile; for E3 ubiquitin-lipopolysaccharide ligase activity is C4462. The Zn(2+) site is built by C4471 and C4474.

The protein belongs to the AAA ATPase family.

It localises to the cytoplasm. The protein resides in the cytosol. It is found in the lipid droplet. The enzyme catalyses S-ubiquitinyl-[E2 ubiquitin-conjugating enzyme]-L-cysteine + [acceptor protein]-L-lysine = [E2 ubiquitin-conjugating enzyme]-L-cysteine + N(6)-ubiquitinyl-[acceptor protein]-L-lysine.. It catalyses the reaction ATP + H2O = ADP + phosphate + H(+). The protein operates within protein modification; protein ubiquitination. Atypical E3 ubiquitin ligase that can catalyze ubiquitination of both proteins and lipids, and which is involved in various processes, such as lipid metabolism, angiogenesis and cell-autonomous immunity. Acts as a key immune sensor by catalyzing ubiquitination of the lipid A moiety of bacterial lipopolysaccharide (LPS) via its RZ-type zinc-finger: restricts the proliferation of cytosolic bacteria, such as Salmonella, by generating the bacterial ubiquitin coat through the ubiquitination of LPS. Ubiquitination of LPS triggers cell-autonomous immunity, such as antibacterial autophagy, leading to degradation of the microbial invader. Involved in lipid metabolism by regulating fat storage and lipid droplet formation; act by inhibiting the lipolytic process. Also regulates lipotoxicity by inhibiting desaturation of fatty acids. Also acts as an E3 ubiquitin-protein ligase via its RING-type zinc finger. Involved in the non-canonical Wnt signaling pathway in vascular development: acts by mediating ubiquitination and degradation of proteins downstream of rspo3, leading to inhibit the non-canonical Wnt signaling pathway and promoting vessel regression. Also has ATPase activity; ATPase activity is required for ubiquitination of LPS. The chain is E3 ubiquitin-protein ligase rnf213-beta (rnf213b) from Danio rerio (Zebrafish).